The following is a 1010-amino-acid chain: Protein CROWDED NUCLEI 4 (1010 aa).

Coiled-coil stretches lie at residues 82 to 350 and 404 to 763; these read LLLL…LIQN and EKEH…NLER. 2 consecutive short sequence motifs (nuclear localization signal) follow at residues 445–452 and 679–686; these read NRKTTMLE and LKRLDAER. Disordered regions lie at residues 787-813, 839-937, and 966-994; these read GVST…PSSA, HYEE…TQTP, and DCSE…GINA. A compositionally biased stretch (basic and acidic residues) spans 849-863; the sequence is EKLKLESSRREEKAY. Polar residues-rich tracts occupy residues 883-893 and 912-921; these read NTSGDETSEPS and TQSVISSPQN.

This sequence belongs to the CRWN family. As to quaternary structure, core component of the LINC complex which is composed of inner nuclear membrane SUN domain-containing proteins coupled to outer nuclear membrane WIP proteins, the nucleoskeletal CRWN/LINC proteins, and, possibly, KAKU4. Binds to KAKU4. In terms of tissue distribution, expressed at low levels in roots, leaves, flowers and flower stalks.

The protein localises to the nucleus membrane. The protein resides in the nucleus. It localises to the nucleoplasm. It is found in the nucleus lamina. Its subcellular location is the cytoplasm. Functionally, component of SUN-protein-containing multivariate complexes also called LINC complexes which link the nucleoskeleton and cytoskeleton by providing versatile outer nuclear membrane attachment sites for cytoskeletal filaments. Required for nucleus structure organization (e.g. size and shape). Involved in the maintenance of interphase chromocenter integrity and organization. This is Protein CROWDED NUCLEI 4 from Arabidopsis thaliana (Mouse-ear cress).